The following is a 359-amino-acid chain: Pheromone receptor 1 (359 aa).

7 helical membrane passes run 5 to 25, 33 to 53, 71 to 87, 110 to 130, 147 to 167, 206 to 226, and 268 to 288; these read VTPFFALFACILVLFALGWHI, ITLSLYLFFGNLDNFVNSVAW, LRHALYIAIPASNLVIA, IIIDLLISVGLPVLYVSLMIV, FLSLSWVWVLLVAAPVLIVSF, LLVLTAIDMLLFFPIYVGSVS, and LILSRLVCPISAYIFFAMFGL. Residues 335 to 359 are disordered; that stretch reads TSGGIDGSPHSEKFSINTPTKYEEA. The span at 348–359 shows a compositional bias: polar residues; sequence FSINTPTKYEEA.

This sequence belongs to the G-protein coupled receptor 4 family.

It is found in the membrane. Functionally, receptor for the A2 pheromone, a prenylated mating factor. In Ustilago hordei (Barley covered smut fungus), this protein is Pheromone receptor 1 (PRA1).